A 454-amino-acid chain; its full sequence is CBL-interacting protein kinase 4 (454 aa).

A Protein kinase domain is found at 25-284 (YELGRMLGRG…ESLAAHHPWF (260 aa)). ATP contacts are provided by residues 31–39 (LGRGTFAKV) and Lys54. The Proton acceptor role is filled by Asp151. Residues 169–198 (DFGLAALPDTLRDDGRLHTACGTPAYAAPE) are activation loop. Residues 311–335 (APPPPLNAFDIISMSPGLDLSGLFG) form the NAF domain. The PPI stretch occupies residues 341–370 (LREKRFTTTASPEKTLEQLGLAGGKLGYVV).

It belongs to the protein kinase superfamily. CAMK Ser/Thr protein kinase family. SNF1 subfamily. Requires Mn(2+) as cofactor.

The enzyme catalyses L-seryl-[protein] + ATP = O-phospho-L-seryl-[protein] + ADP + H(+). The catalysed reaction is L-threonyl-[protein] + ATP = O-phospho-L-threonyl-[protein] + ADP + H(+). Functionally, CIPK serine-threonine protein kinases interact with CBL proteins. Binding of a CBL protein to the regulatory NAF domain of CIPK protein lead to the activation of the kinase in a calcium-dependent manner. The sequence is that of CBL-interacting protein kinase 4 (CIPK4) from Oryza sativa subsp. japonica (Rice).